Here is a 510-residue protein sequence, read N- to C-terminus: Arginine biosynthesis bifunctional protein ArgJ, mitochondrial (510 aa).

Residues 57 to 70 (TSTNEPSAATTNVP) show a composition bias toward polar residues. The tract at residues 57-76 (TSTNEPSAATTNVPHPQEAP) is disordered. 4 residues coordinate substrate: threonine 222, lysine 248, threonine 267, and glutamate 364. The Nucleophile role is filled by threonine 267.

The protein belongs to the ArgJ family. In terms of assembly, heterodimer of an alpha and a beta chain. The alpha and beta chains are autoproteolytically processed from a single precursor protein within the mitochondrion.

Its subcellular location is the mitochondrion matrix. The enzyme catalyses N(2)-acetyl-L-ornithine + L-glutamate = N-acetyl-L-glutamate + L-ornithine. The catalysed reaction is L-glutamate + acetyl-CoA = N-acetyl-L-glutamate + CoA + H(+). Its pathway is amino-acid biosynthesis; L-arginine biosynthesis; L-ornithine and N-acetyl-L-glutamate from L-glutamate and N(2)-acetyl-L-ornithine (cyclic): step 1/1. It functions in the pathway amino-acid biosynthesis; L-arginine biosynthesis; N(2)-acetyl-L-ornithine from L-glutamate: step 1/4. Catalyzes two activities which are involved in the cyclic version of arginine biosynthesis: the synthesis of acetylglutamate from glutamate and acetyl-CoA, and of ornithine by transacetylation between acetylornithine and glutamate. This Malassezia globosa (strain ATCC MYA-4612 / CBS 7966) (Dandruff-associated fungus) protein is Arginine biosynthesis bifunctional protein ArgJ, mitochondrial.